The chain runs to 98 residues: Small ribosomal subunit protein bS20 (98 aa).

Belongs to the bacterial ribosomal protein bS20 family.

Binds directly to 16S ribosomal RNA. This is Small ribosomal subunit protein bS20 from Synechococcus sp. (strain CC9902).